The sequence spans 273 residues: MQHEHIYFSVRMRAAQGGSHEQGGKHISGGEKIVPYHDLSSCMAELAEKGLNHSRGKPDFMNIQFEQIEEAVKYVSPLPVGTHVVSSVADGQATARSLLTEAGIKPQVIEEAYYVLSELTELRGALFIDAATGQRLDDPIKNGVRVTRMDWPLDDFSCWLNEHQLSPNIRMKEALALATKVTQHPATIAELCWSDDPDYITGYVASQKFGYQRISQLKELGEEKGCRIFFVDQTKMKNLDAYINYLTTQPVLIRWKQEVMADESRSMAGRAAE.

Belongs to the BioW family. As to quaternary structure, homodimer. It depends on Mg(2+) as a cofactor.

It catalyses the reaction heptanedioate + ATP + CoA = 6-carboxyhexanoyl-CoA + AMP + diphosphate. It functions in the pathway metabolic intermediate metabolism; pimeloyl-CoA biosynthesis; pimeloyl-CoA from pimelate: step 1/1. In terms of biological role, catalyzes the transformation of pimelate into pimeloyl-CoA with concomitant hydrolysis of ATP to AMP. This chain is 6-carboxyhexanoate--CoA ligase, found in Alkalihalophilus pseudofirmus (strain ATCC BAA-2126 / JCM 17055 / OF4) (Bacillus pseudofirmus).